The primary structure comprises 124 residues: Large ribosomal subunit protein eL22y (124 aa).

This sequence belongs to the eukaryotic ribosomal protein eL22 family.

The protein is Large ribosomal subunit protein eL22y (RPL22C) of Arabidopsis thaliana (Mouse-ear cress).